A 219-amino-acid chain; its full sequence is Flagellar L-ring protein (219 aa).

Residues 1-14 form the signal peptide; that stretch reads MKRLVLISLVLAAG. A lipid anchor (N-palmitoyl cysteine) is attached at Cys-15. The S-diacylglycerol cysteine moiety is linked to residue Cys-15.

The protein belongs to the FlgH family. In terms of assembly, the basal body constitutes a major portion of the flagellar organelle and consists of four rings (L,P,S, and M) mounted on a central rod.

The protein localises to the cell outer membrane. Its subcellular location is the bacterial flagellum basal body. In terms of biological role, assembles around the rod to form the L-ring and probably protects the motor/basal body from shearing forces during rotation. This is Flagellar L-ring protein from Dechloromonas aromatica (strain RCB).